A 374-amino-acid chain; its full sequence is Chaperone protein DnaJ (374 aa).

Positions 6-71 (DYYAVLEVTR…QKRAAYDRFG (66 aa)) constitute a J domain. The CR-type zinc finger occupies 130 to 209 (GVKKPITVPT…CHGAGTVERE (80 aa)). Zn(2+) is bound by residues C143, C146, C161, C164, C183, C186, C197, and C200. CXXCXGXG motif repeat units lie at residues 143–150 (CESCEGTG), 161–168 (CPTCHGAG), 183–190 (CPTCHGAG), and 197–204 (CAACHGAG).

The protein belongs to the DnaJ family. Homodimer. Requires Zn(2+) as cofactor.

The protein resides in the cytoplasm. Its function is as follows. Participates actively in the response to hyperosmotic and heat shock by preventing the aggregation of stress-denatured proteins and by disaggregating proteins, also in an autonomous, DnaK-independent fashion. Unfolded proteins bind initially to DnaJ; upon interaction with the DnaJ-bound protein, DnaK hydrolyzes its bound ATP, resulting in the formation of a stable complex. GrpE releases ADP from DnaK; ATP binding to DnaK triggers the release of the substrate protein, thus completing the reaction cycle. Several rounds of ATP-dependent interactions between DnaJ, DnaK and GrpE are required for fully efficient folding. Also involved, together with DnaK and GrpE, in the DNA replication of plasmids through activation of initiation proteins. The chain is Chaperone protein DnaJ from Gluconacetobacter diazotrophicus (strain ATCC 49037 / DSM 5601 / CCUG 37298 / CIP 103539 / LMG 7603 / PAl5).